The following is a 369-amino-acid chain: Choline kinase B2 (369 aa).

Belongs to the choline/ethanolamine kinase family. It depends on Mg(2+) as a cofactor.

It catalyses the reaction choline + ATP = phosphocholine + ADP + H(+). Its pathway is phospholipid metabolism; phosphatidylcholine biosynthesis; phosphocholine from choline: step 1/1. In terms of biological role, catalyzes the first step in phosphatidylcholine biosynthesis. Phosphorylates choline. The polypeptide is Choline kinase B2 (ckb-2) (Caenorhabditis elegans).